The following is a 414-amino-acid chain: Thyroid hormone receptor beta-B (414 aa).

The interval 1–59 is modulating; that stretch reads MPSSMSVRLFTASAAQRKKIQEGDCCVVLAGKTQGRFILIGAVARVSGYIPSYLDKDEL. 2 NR C4-type zinc fingers span residues 60–80 and 98–122; these read CVVC…CEGC and CKYE…FKKC. Residues 60–134 constitute a DNA-binding region (nuclear receptor); that stretch reads CVVCGDKATG…VGMATDLVLD (75 aa). Residues 170 to 414 form the NR LBD domain; that stretch reads EEWELIQVVT…PPLFLEVFED (245 aa).

Belongs to the nuclear hormone receptor family. NR1 subfamily.

The protein resides in the nucleus. High affinity receptor for triiodothyronine (T3). In Xenopus laevis (African clawed frog), this protein is Thyroid hormone receptor beta-B (thrb-b).